The following is a 160-amino-acid chain: Cytochrome b6-f complex subunit 4 (160 aa).

A run of 3 helical transmembrane segments spans residues 36 to 56, 95 to 115, and 131 to 151; these read LLYIFPVVILGTIACNVGLAV, LLGVLLMVSVPVGLLTVPFLE, and TVFLIGTAVALWLGIGATLPI.

This sequence belongs to the cytochrome b family. PetD subfamily. As to quaternary structure, the 4 large subunits of the cytochrome b6-f complex are cytochrome b6, subunit IV (17 kDa polypeptide, petD), cytochrome f and the Rieske protein, while the 4 small subunits are petG, petL, petM and petN. The complex functions as a dimer.

It localises to the plastid. The protein localises to the chloroplast thylakoid membrane. Its function is as follows. Component of the cytochrome b6-f complex, which mediates electron transfer between photosystem II (PSII) and photosystem I (PSI), cyclic electron flow around PSI, and state transitions. This is Cytochrome b6-f complex subunit 4 from Daucus carota (Wild carrot).